Consider the following 461-residue polypeptide: Gram-negative bacteria-binding protein 2 (461 aa).

Residues 1–20 (MRWEFLPCLLLLISNNKIFG) form the signal peptide. A CBM39 domain is found at 21–115 (FKVPSINFEM…TRVIINTRLL (95 aa)). N-linked (GlcNAc...) asparagine glycans are attached at residues asparagine 71, asparagine 170, asparagine 177, and asparagine 364. Positions 179–461 (TTWKHDIRQR…VIDYVRVYAE (283 aa)) constitute a GH16 domain.

The protein belongs to the insect beta-1,3-glucan binding protein family.

The protein localises to the secreted. Functionally, involved in the recognition of invading microorganisms. Binds specifically to beta-1,3-glucan and activates the phenoloxidase cascade. This chain is Gram-negative bacteria-binding protein 2, found in Drosophila melanogaster (Fruit fly).